The sequence spans 693 residues: Polyribonucleotide nucleotidyltransferase (693 aa).

2 residues coordinate Mg(2+): aspartate 486 and aspartate 492. Residues 553-612 (PRIHTIKINPEKIKDVIGKGGSVIRMLTEETGTTIEIEDDGTVKISAVMQEKAKCAIQRI) form the KH domain. Residues 622-690 (GSVYTGKVTR…RQGRLRLSIK (69 aa)) form the S1 motif domain.

The protein belongs to the polyribonucleotide nucleotidyltransferase family. In terms of assembly, component of the RNA degradosome, which is a multiprotein complex involved in RNA processing and mRNA degradation. It depends on Mg(2+) as a cofactor.

It localises to the cytoplasm. It catalyses the reaction RNA(n+1) + phosphate = RNA(n) + a ribonucleoside 5'-diphosphate. In terms of biological role, involved in mRNA degradation. Catalyzes the phosphorolysis of single-stranded polyribonucleotides processively in the 3'- to 5'-direction. This Buchnera aphidicola subsp. Baizongia pistaciae (strain Bp) protein is Polyribonucleotide nucleotidyltransferase.